Consider the following 194-residue polypeptide: ATP-dependent Clp protease proteolytic subunit (194 aa).

Residue S98 is the Nucleophile of the active site. H123 is a catalytic residue.

This sequence belongs to the peptidase S14 family. In terms of assembly, fourteen ClpP subunits assemble into 2 heptameric rings which stack back to back to give a disk-like structure with a central cavity, resembling the structure of eukaryotic proteasomes.

Its subcellular location is the cytoplasm. It catalyses the reaction Hydrolysis of proteins to small peptides in the presence of ATP and magnesium. alpha-casein is the usual test substrate. In the absence of ATP, only oligopeptides shorter than five residues are hydrolyzed (such as succinyl-Leu-Tyr-|-NHMec, and Leu-Tyr-Leu-|-Tyr-Trp, in which cleavage of the -Tyr-|-Leu- and -Tyr-|-Trp bonds also occurs).. Cleaves peptides in various proteins in a process that requires ATP hydrolysis. Has a chymotrypsin-like activity. Plays a major role in the degradation of misfolded proteins. The sequence is that of ATP-dependent Clp protease proteolytic subunit from Actinobacillus succinogenes (strain ATCC 55618 / DSM 22257 / CCUG 43843 / 130Z).